A 190-amino-acid polypeptide reads, in one-letter code: MSVTSLSFPYGESIQWFCADNAKNLPSSPLKEWLLAPGSLTQKLKGCCDKFEVKILGEGQCVPLEGEYPKQNAVWVREVLLCLDSVPWVFARTLIPQSLLSTRQADFLGLGTRPLGELLFSQDSFVPGRIEIARFTTESRLAQLAQSLAQNVEHELWGRRRYFHHDQEEMFVSEMFLPAAVQAMAKLKLD.

Residues Arg-77, Leu-115, and Glu-174 each coordinate substrate.

It belongs to the UbiC family.

Its subcellular location is the cytoplasm. The enzyme catalyses chorismate = 4-hydroxybenzoate + pyruvate. It participates in cofactor biosynthesis; ubiquinone biosynthesis. Its function is as follows. Removes the pyruvyl group from chorismate, with concomitant aromatization of the ring, to provide 4-hydroxybenzoate (4HB) for the ubiquinone pathway. The polypeptide is Probable chorismate pyruvate-lyase (Shewanella sp. (strain MR-4)).